Consider the following 83-residue polypeptide: Small ribosomal subunit protein bS16c (83 aa).

The protein belongs to the bacterial ribosomal protein bS16 family.

The protein localises to the plastid. Its subcellular location is the chloroplast. This Chaetosphaeridium globosum (Charophycean green alga) protein is Small ribosomal subunit protein bS16c.